Reading from the N-terminus, the 154-residue chain is Pro-corazonin (154 aa).

The signal sequence occupies residues 1-19 (MLRLLLLPLFLFTLSMCMG). Gln20 bears the Pyrrolidone carboxylic acid mark. Position 30 is an asparagine amide (Asn30). Residues 70 to 154 (LERCLSQLQR…SAEPNVFGKH (85 aa)) constitute a propeptide that is removed on maturation.

Belongs to the corazonin family. As to expression, expression is restricted to 24 neurons in the larval CNS (8 in the brain and 16 in the ventral nerve cord) and 12-16 neurons in the pars lateralis of the adult brain.

It is found in the secreted. Functionally, cardioactive peptide. Corazonin is probably involved in the physiological regulation of the heart beat. Clock (Clk) and cycle (cyc) proteins negatively regulate Crz transcription in a cell-specific manner. This is Pro-corazonin (Crz) from Drosophila simulans (Fruit fly).